The chain runs to 756 residues: Polyribonucleotide nucleotidyltransferase (756 aa).

Mg(2+)-binding residues include Asp-547 and Asp-553. The KH domain occupies 613 to 672; sequence PRITSVTIPVNKIGELIGPKGKTINAITEETGADVSIEEDGTVYISAATGEAADAAIDRV. Positions 684–753 constitute an S1 motif domain; the sequence is GERFLGTVVK…NRGKISLVPV (70 aa).

It belongs to the polyribonucleotide nucleotidyltransferase family. The cofactor is Mg(2+).

The protein resides in the cytoplasm. It carries out the reaction RNA(n+1) + phosphate = RNA(n) + a ribonucleoside 5'-diphosphate. Involved in mRNA degradation. Catalyzes the phosphorolysis of single-stranded polyribonucleotides processively in the 3'- to 5'-direction. The polypeptide is Polyribonucleotide nucleotidyltransferase (Corynebacterium aurimucosum (strain ATCC 700975 / DSM 44827 / CIP 107346 / CN-1) (Corynebacterium nigricans)).